We begin with the raw amino-acid sequence, 199 residues long: 7-methyl-GTP pyrophosphatase (199 aa).

The Proton acceptor role is filled by Asp-76.

This sequence belongs to the Maf family. YceF subfamily. A divalent metal cation is required as a cofactor.

It is found in the cytoplasm. It carries out the reaction N(7)-methyl-GTP + H2O = N(7)-methyl-GMP + diphosphate + H(+). In terms of biological role, nucleoside triphosphate pyrophosphatase that hydrolyzes 7-methyl-GTP (m(7)GTP). May have a dual role in cell division arrest and in preventing the incorporation of modified nucleotides into cellular nucleic acids. The chain is 7-methyl-GTP pyrophosphatase from Mesorhizobium japonicum (strain LMG 29417 / CECT 9101 / MAFF 303099) (Mesorhizobium loti (strain MAFF 303099)).